A 196-amino-acid polypeptide reads, in one-letter code: Pyridoxal 5'-phosphate synthase subunit PdxT (196 aa).

L-glutamine is bound at residue 47 to 49; sequence GES. C79 (nucleophile) is an active-site residue. L-glutamine contacts are provided by residues R106 and 134-135; that span reads IR. Residues H170 and E172 each act as charge relay system in the active site.

Belongs to the glutaminase PdxT/SNO family. In the presence of PdxS, forms a dodecamer of heterodimers. Only shows activity in the heterodimer.

The catalysed reaction is aldehydo-D-ribose 5-phosphate + D-glyceraldehyde 3-phosphate + L-glutamine = pyridoxal 5'-phosphate + L-glutamate + phosphate + 3 H2O + H(+). It catalyses the reaction L-glutamine + H2O = L-glutamate + NH4(+). Its pathway is cofactor biosynthesis; pyridoxal 5'-phosphate biosynthesis. In terms of biological role, catalyzes the hydrolysis of glutamine to glutamate and ammonia as part of the biosynthesis of pyridoxal 5'-phosphate. The resulting ammonia molecule is channeled to the active site of PdxS. The sequence is that of Pyridoxal 5'-phosphate synthase subunit PdxT from Halalkalibacterium halodurans (strain ATCC BAA-125 / DSM 18197 / FERM 7344 / JCM 9153 / C-125) (Bacillus halodurans).